A 245-amino-acid chain; its full sequence is tRNA pseudouridine synthase A (245 aa).

The active-site Nucleophile is Asp52. Residue Tyr111 coordinates substrate.

Belongs to the tRNA pseudouridine synthase TruA family. As to quaternary structure, homodimer.

The catalysed reaction is uridine(38/39/40) in tRNA = pseudouridine(38/39/40) in tRNA. Functionally, formation of pseudouridine at positions 38, 39 and 40 in the anticodon stem and loop of transfer RNAs. This chain is tRNA pseudouridine synthase A, found in Thermotoga sp. (strain RQ2).